Reading from the N-terminus, the 170-residue chain is Large ribosomal subunit protein uL16 (170 aa).

The protein belongs to the universal ribosomal protein uL16 family.

This is Large ribosomal subunit protein uL16 from Methanoculleus marisnigri (strain ATCC 35101 / DSM 1498 / JR1).